A 311-amino-acid chain; its full sequence is Transcription factor BIM2 (311 aa).

Disordered regions lie at residues 1 to 60 (MRTG…RRSK) and 271 to 311 (ANQG…MKTL). Basic and acidic residues-rich tracts occupy residues 33–44 (SNRDSKENDKAS) and 51–60 (SVTEQRRRSK). The 51-residue stretch at 45–95 (AIRSKHSVTEQRRRSKINERFQILRELIPNSEQKRDTASFLLEVIDYVQYL) folds into the bHLH domain.

Homodimer. Interacts with the N-terminus of BZR2/BES1. As to expression, expressed constitutively in roots, leaves, stems, and flowers.

The protein resides in the nucleus. Positive brassinosteroid-signaling protein. The chain is Transcription factor BIM2 (BIM2) from Arabidopsis thaliana (Mouse-ear cress).